The sequence spans 375 residues: Probable dipeptidase PepE (375 aa).

A run of 2 helical transmembrane segments spans residues 15 to 35 (LALA…ITPG) and 55 to 75 (LVLP…LAAL). Positions 230, 242, 306, 335, and 349 each coordinate Mn(2+).

Belongs to the peptidase M24B family. Requires Mn(2+) as cofactor.

The protein localises to the cell membrane. The protein is Probable dipeptidase PepE (pepE) of Mycobacterium bovis (strain ATCC BAA-935 / AF2122/97).